The primary structure comprises 509 residues: Lysine--tRNA ligase (509 aa).

Mg(2+) contacts are provided by E417 and E424.

It belongs to the class-II aminoacyl-tRNA synthetase family. In terms of assembly, homodimer. It depends on Mg(2+) as a cofactor.

It is found in the cytoplasm. It carries out the reaction tRNA(Lys) + L-lysine + ATP = L-lysyl-tRNA(Lys) + AMP + diphosphate. The polypeptide is Lysine--tRNA ligase (Blochmanniella pennsylvanica (strain BPEN)).